The chain runs to 331 residues: C4-dicarboxylate-binding periplasmic protein DctP (331 aa).

An N-terminal signal peptide occupies residues 1-23 (MLKHTAKALVCALSLTVAGIVQA).

The protein belongs to the bacterial solute-binding protein 7 family. The complex comprises the extracytoplasmic solute receptor protein DctP, and the two transmembrane proteins DctQ and DctM.

The protein localises to the periplasm. Its function is as follows. Part of the tripartite ATP-independent periplasmic (TRAP) transport system DctPQM involved in C4-dicarboxylates uptake. This is C4-dicarboxylate-binding periplasmic protein DctP from Pseudomonas aeruginosa (strain ATCC 15692 / DSM 22644 / CIP 104116 / JCM 14847 / LMG 12228 / 1C / PRS 101 / PAO1).